A 299-amino-acid polypeptide reads, in one-letter code: MAKIVECIPNFSEGQNQAVIDGLVATAKSIPGVTLLDYSSDASHNRSVFTLVGDDQSIQEAAFQLVKYASENIDMTKHHGEHPRMGATDVCPFVPIKDITTQECVEISKQVAERINRELGIPIFLYEDSATRPERQNLAKVRKGQFEGMPEKLLEEDWAPDYGDRKIHPTAGVTAVGARMPLVAFNVNLDTDNIDIAHKIAKIIRGSGGGYKYCKAIGVMLEDRHIAQVSMNMVNFEKCSLYRTFETIKFEARRYGVNVIGSEVIGLAPAKALIDVAEYYLQVEDFDYHKQILENHLLG.

H82 acts as the For formimidoyltransferase activity in catalysis. 163–172 (GDRKIHPTAG) contributes to the folate binding site.

It belongs to the formiminotransferase family.

The protein resides in the cytoplasm. The enzyme catalyses (6S)-5-formyl-5,6,7,8-tetrahydrofolate + L-glutamate = N-formyl-L-glutamate + (6S)-5,6,7,8-tetrahydrofolate + H(+). It carries out the reaction 5-formimidoyltetrahydrofolate + L-glutamate = N-formimidoyl-L-glutamate + (6S)-5,6,7,8-tetrahydrofolate. It catalyses the reaction (6S)-5-formyl-5,6,7,8-tetrahydrofolate + ATP = (6R)-5,10-methenyltetrahydrofolate + ADP + phosphate. It functions in the pathway amino-acid degradation; L-histidine degradation into L-glutamate; L-glutamate from N-formimidoyl-L-glutamate (transferase route): step 1/1. Its pathway is one-carbon metabolism; tetrahydrofolate interconversion. Functionally, catalyzes the transfer of the formyl group from N-formylglutamate to tetrahydrofolate (THF) to yield 5-formyltetrahydrofolate (5-CHO-THF) and glutamate (Glu). The triglutamate form of 5-CHO-THF (5-CHO-THF-Glu3) can also be used as substrate. It can also catalyze the transfer of the formimino group from N-formiminoglutamate to tetrahydrofolate (THF) to yield 5-formiminotetrahydrofolate (5-NH=CH-THF) and glutamate (Glu). It can replace YgfA to catalyze the irreversible ATP-dependent transformation of 5-CHO-THF to form 5,10-methenyltetrahydrofolate (5,10-CH=THF). The polypeptide is Glutamate formimidoyltransferase (Streptococcus pyogenes serotype M1).